The following is a 428-amino-acid chain: Glutamyl-tRNA reductase (428 aa).

Substrate contacts are provided by residues 55–58 (TCNR), S114, 119–121 (ETQ), and Q125. The active-site Nucleophile is C56. Residue 194–199 (GAGEMI) coordinates NADP(+).

It belongs to the glutamyl-tRNA reductase family. In terms of assembly, homodimer.

The catalysed reaction is (S)-4-amino-5-oxopentanoate + tRNA(Glu) + NADP(+) = L-glutamyl-tRNA(Glu) + NADPH + H(+). The protein operates within porphyrin-containing compound metabolism; protoporphyrin-IX biosynthesis; 5-aminolevulinate from L-glutamyl-tRNA(Glu): step 1/2. In terms of biological role, catalyzes the NADPH-dependent reduction of glutamyl-tRNA(Glu) to glutamate 1-semialdehyde (GSA). The sequence is that of Glutamyl-tRNA reductase from Paraburkholderia xenovorans (strain LB400).